The primary structure comprises 220 residues: Pyrrolidone-carboxylate peptidase (220 aa).

Catalysis depends on residues E80, C143, and H167.

The protein belongs to the peptidase C15 family. As to quaternary structure, homotetramer.

The protein resides in the cytoplasm. It catalyses the reaction Release of an N-terminal pyroglutamyl group from a polypeptide, the second amino acid generally not being Pro.. Removes 5-oxoproline from various penultimate amino acid residues except L-proline. The sequence is that of Pyrrolidone-carboxylate peptidase (pcp) from Thermococcus litoralis (strain ATCC 51850 / DSM 5473 / JCM 8560 / NS-C).